We begin with the raw amino-acid sequence, 337 residues long: GTP 3',8-cyclase (337 aa).

In terms of domain architecture, Radical SAM core spans 18 to 242 (NFGRRFHYLR…DKADILDGPA (225 aa)). A GTP-binding site is contributed by R27. Residues C34 and C38 each coordinate [4Fe-4S] cluster. Y40 contributes to the S-adenosyl-L-methionine binding site. C41 provides a ligand contact to [4Fe-4S] cluster. A GTP-binding site is contributed by R76. G80 contributes to the S-adenosyl-L-methionine binding site. T107 provides a ligand contact to GTP. S131 contacts S-adenosyl-L-methionine. K168 is a GTP binding site. Residue M202 coordinates S-adenosyl-L-methionine. C265 and C268 together coordinate [4Fe-4S] cluster. Position 270-272 (270-272 (RLR)) interacts with GTP. [4Fe-4S] cluster is bound at residue C282.

Belongs to the radical SAM superfamily. MoaA family. Monomer and homodimer. It depends on [4Fe-4S] cluster as a cofactor.

The catalysed reaction is GTP + AH2 + S-adenosyl-L-methionine = (8S)-3',8-cyclo-7,8-dihydroguanosine 5'-triphosphate + 5'-deoxyadenosine + L-methionine + A + H(+). The protein operates within cofactor biosynthesis; molybdopterin biosynthesis. Functionally, catalyzes the cyclization of GTP to (8S)-3',8-cyclo-7,8-dihydroguanosine 5'-triphosphate. The sequence is that of GTP 3',8-cyclase from Shewanella denitrificans (strain OS217 / ATCC BAA-1090 / DSM 15013).